Consider the following 307-residue polypeptide: Serine/threonine-protein phosphatase 4 catalytic subunit B (307 aa).

Aspartate 54, histidine 56, aspartate 82, and asparagine 114 together coordinate Mn(2+). Histidine 115 serves as the catalytic Proton donor. Positions 164 and 238 each coordinate Mn(2+). At leucine 307 the chain carries Leucine methyl ester.

Belongs to the PPP phosphatase family. PP-4 (PP-X) subfamily. Serine/threonine-protein phosphatase 4 (PP4) occurs in different assemblies of the catalytic and one or more regulatory subunits. Mn(2+) serves as cofactor.

The protein localises to the cytoplasm. It localises to the cytoskeleton. It is found in the microtubule organizing center. The protein resides in the centrosome. It catalyses the reaction O-phospho-L-seryl-[protein] + H2O = L-seryl-[protein] + phosphate. The catalysed reaction is O-phospho-L-threonyl-[protein] + H2O = L-threonyl-[protein] + phosphate. In terms of biological role, protein phosphatase that regulates many processes such as microtubule organization at centrosomes. The sequence is that of Serine/threonine-protein phosphatase 4 catalytic subunit B (ppp4cb) from Danio rerio (Zebrafish).